The chain runs to 476 residues: MKVTLPDFRRAGVLVVGDVMLDRYWYGPTCRISPEAPVPVVKVDTIEERPGGAANVAMNIASLGAVARLVGLTGIDDAARALICKLSEVRVRCDFVSVPTHPTITKLRVLSRNQQLIRLDFEEGFDGVDPTPIFERIQLALPQIGALVLSDYAKGALNSVQPMIQLARKANVPVLIDPKGSDFERYRGATLLTPNLSEFEAVVGRCKNEEELVNRGMQLVADFELSALLVTRSEQGMTLLQLGKPPLHLPTQAKEVFDVTGAGDTVIGVLAAALAAGNSLEESCFLANAAAGVVVGKLGTSTVSPIELENAIRGRAETGFGVMDEQQLKIAVAQARQRGEKVVMTNGIFDILHAGHVSYLANARKLGDRLIVAVNSDASTKRLKGEKRPVNPLEQRMVVLGALEAVDWVVPFEEDTPQRLIADILPDLLVKGGDYKPHEIAGSEEVWAAGGEVKVLNFEDGVSTTNIIQSIKNGRG.

A ribokinase region spans residues 1–318 (MKVTLPDFRR…ENAIRGRAET (318 aa)). Position 195 to 198 (195 to 198 (NLSE)) interacts with ATP. Residue aspartate 264 is part of the active site. A cytidylyltransferase region spans residues 344–476 (MTNGIFDILH…IIQSIKNGRG (133 aa)).

It in the N-terminal section; belongs to the carbohydrate kinase PfkB family. The protein in the C-terminal section; belongs to the cytidylyltransferase family. As to quaternary structure, homodimer.

The enzyme catalyses D-glycero-beta-D-manno-heptose 7-phosphate + ATP = D-glycero-beta-D-manno-heptose 1,7-bisphosphate + ADP + H(+). It carries out the reaction D-glycero-beta-D-manno-heptose 1-phosphate + ATP + H(+) = ADP-D-glycero-beta-D-manno-heptose + diphosphate. The protein operates within nucleotide-sugar biosynthesis; ADP-L-glycero-beta-D-manno-heptose biosynthesis; ADP-L-glycero-beta-D-manno-heptose from D-glycero-beta-D-manno-heptose 7-phosphate: step 1/4. It participates in nucleotide-sugar biosynthesis; ADP-L-glycero-beta-D-manno-heptose biosynthesis; ADP-L-glycero-beta-D-manno-heptose from D-glycero-beta-D-manno-heptose 7-phosphate: step 3/4. In terms of biological role, catalyzes the phosphorylation of D-glycero-D-manno-heptose 7-phosphate at the C-1 position to selectively form D-glycero-beta-D-manno-heptose-1,7-bisphosphate. Functionally, catalyzes the ADP transfer from ATP to D-glycero-beta-D-manno-heptose 1-phosphate, yielding ADP-D-glycero-beta-D-manno-heptose. In Yersinia pestis bv. Antiqua (strain Antiqua), this protein is Bifunctional protein HldE.